The sequence spans 330 residues: MKGALELQHRVSAHPDSRCWYVAWNPAGTTLATCGGDRAIRIWGKEGDSWECKCVLSDGHQRTVRKVAWSPCGKYLASASFDATTCIWKKTDEDFECLTVLEGHENEVKCVAWAPSGSLLATCSRDKSVWIWEVDEEDEYECLSVVNSHTQDVKHVVWHPTQELLASASYDNKICIYKEEDDDWECRATLEGHESTVWSLTFDPEGRRLASCSDDRTVKIWKESTTGDGSSDESWKCICTLSGFHGRTIYDIAWCRLTGALATACGDDGVRVFSEDPTADPEQPIFALSAHVPKAHNQDVNCVSWNPKEAGLLATCSDNGEFAIWKYNSA.

WD repeat units lie at residues 14–53 (HPDS…WECK), 59–98 (GHQR…FECL), 103–142 (GHEN…EYEC), 148–187 (SHTQ…WECR), 192–231 (GHES…DGSS), 244–283 (FHGR…DPEQ), and 295–330 (AHNQ…YNSA).

Belongs to the WD repeat CIA1 family. In terms of assembly, component of the CIA complex.

Its function is as follows. Key component of the cytosolic iron-sulfur protein assembly (CIA) complex, a multiprotein complex that mediates the incorporation of iron-sulfur cluster into extramitochondrial Fe/S proteins. The chain is Probable cytosolic iron-sulfur protein assembly protein ciao1 (ciao1) from Danio rerio (Zebrafish).